The primary structure comprises 2319 residues: A-kinase anchor protein 6 (2319 aa).

Polar residues-rich tracts occupy residues methionine 1–arginine 12 and glycine 324–proline 339. 5 disordered regions span residues methionine 1 to serine 24, valine 301 to proline 369, serine 493 to glycine 532, leucine 566 to valine 614, and threonine 691 to lysine 757. Positions serine 340–serine 351 are enriched in low complexity. Polar residues-rich tracts occupy residues glycine 518 to glycine 532 and leucine 566 to isoleucine 591. The segment covering serine 697 to serine 711 has biased composition (low complexity). Positions lysine 735–serine 754 are enriched in basic and acidic residues. 2 Spectrin repeats span residues glutamine 762 to glutamate 848 and glutamate 1036 to aspartate 1150. Serine 1073 bears the Phosphoserine mark. The segment at lysine 1250–glutamine 1272 is disordered. Over residues serine 1255–alanine 1265 the composition is skewed to acidic residues. Phosphoserine occurs at positions 1570 and 1595. Disordered stretches follow at residues valine 1821 to threonine 1842, glutamate 1900 to lysine 1925, and lysine 1963 to serine 1983. 3 stretches are compositionally biased toward polar residues: residues aspartate 1830 to threonine 1842, asparagine 1911 to leucine 1920, and asparagine 1972 to lysine 1982. The PKA-RII subunit binding domain stretch occupies residues isoleucine 2063–glutamine 2076. Positions phenylalanine 2198–serine 2215 are enriched in low complexity. The tract at residues phenylalanine 2198–arginine 2319 is disordered.

In terms of assembly, interacts with RII subunit of PKA, phosphatase 2B (calcineurin) and AKAP79. Interacts with SYNPO2. As to expression, highly expressed in cardiac and skeletal muscle, followed by brain.

The protein localises to the sarcoplasmic reticulum. Its subcellular location is the nucleus membrane. In terms of biological role, binds to type II regulatory subunits of protein kinase A and anchors/targets them to the nuclear membrane or sarcoplasmic reticulum. May act as an adapter for assembling multiprotein complexes. The chain is A-kinase anchor protein 6 (AKAP6) from Homo sapiens (Human).